The sequence spans 217 residues: MDLAQPSQPVDELELSVLERQPEENTPLNGADKVFPSLDEEVPPAEANKESPWSSCNKNVVGRCKLWMIITSIFLGVITVIIIGLCLAAVTYVDEDENEILELSSNKTFFIMLKIPEECVAEEELPHLLTERLTDVYSTSPSLGRYFTSVEIVDFSGENATVTYDLQFGVPSDDENFMKYMMSEELVLGILLQDFRDQNIPGCESLGLDPTSLLLYE.

Residues 1-37 (MDLAQPSQPVDELELSVLERQPEENTPLNGADKVFPS) form a disordered region. Residues 66 to 86 (LWMIITSIFLGVITVIIIGLC) form a helical membrane-spanning segment.

As to quaternary structure, interacts with LIPH. Detected predominantly in the skin, with strongest expression in the inner root sheath of the hair follicle.

The protein localises to the endoplasmic reticulum. It is found in the cell membrane. Has a role in LIPH-mediated synthesis of 2-acyl lysophosphatidic acid (LPA). LPA is a bioactive lipid mediator involved in different biological processes, and necessary to promote hair formation and growth. This Homo sapiens (Human) protein is TPA-induced transmembrane protein (TTMP).